The sequence spans 441 residues: Plasmepsin VI (441 aa).

The Cytoplasmic segment spans residues 1–7; sequence MTNFCIK. Residues 8–28 form a helical; Signal-anchor for type II membrane protein membrane-spanning segment; the sequence is SYLFLYLSFLLFFDIITIFHV. The Extracellular segment spans residues 29 to 441; it reads SSIRISTVLK…VGVVKSNHNF (413 aa). The Peptidase A1 domain maps to 109-435; that stretch reads FIGDIEIGNP…DNDHKLVGVV (327 aa). Catalysis depends on residues Asp-127 and Asp-324.

This sequence belongs to the peptidase A1 family.

The protein localises to the membrane. Functionally, during the development in the mosquito midgut, plays a role in sporozoite egress from oocysts. The chain is Plasmepsin VI from Plasmodium berghei (strain Anka).